The chain runs to 513 residues: Na(+)/H(+) antiporter NhaB (513 aa).

Transmembrane regions (helical) follow at residues 23 to 43, 52 to 72, 97 to 117, 120 to 140, 144 to 164, 202 to 222, 238 to 258, 303 to 323, 348 to 368, 391 to 411, 447 to 467, and 475 to 495; these read LALI…PFVA, IFTL…LLAI, LLLM…LFIF, LLLS…AAAF, FLDA…FYGI, LMMH…VGEP, FFLR…LTCL, AIIG…VGLI, TESL…AVII, LFYI…VGTI, ATPN…APLI, and VWMA…CVEF.

It belongs to the NhaB Na(+)/H(+) (TC 2.A.34) antiporter family.

Its subcellular location is the cell inner membrane. The enzyme catalyses 2 Na(+)(in) + 3 H(+)(out) = 2 Na(+)(out) + 3 H(+)(in). In terms of biological role, na(+)/H(+) antiporter that extrudes sodium in exchange for external protons. The protein is Na(+)/H(+) antiporter NhaB of Escherichia coli O6:H1 (strain CFT073 / ATCC 700928 / UPEC).